Reading from the N-terminus, the 179-residue chain is Acireductone dioxygenase (179 aa).

The Fe(2+) site is built by His99, His101, Glu105, and His143. The Ni(2+) site is built by His99, His101, Glu105, and His143.

Belongs to the acireductone dioxygenase (ARD) family. Monomer. Requires Fe(2+) as cofactor. Ni(2+) is required as a cofactor.

It catalyses the reaction 1,2-dihydroxy-5-(methylsulfanyl)pent-1-en-3-one + O2 = 3-(methylsulfanyl)propanoate + CO + formate + 2 H(+). The enzyme catalyses 1,2-dihydroxy-5-(methylsulfanyl)pent-1-en-3-one + O2 = 4-methylsulfanyl-2-oxobutanoate + formate + 2 H(+). It participates in amino-acid biosynthesis; L-methionine biosynthesis via salvage pathway; L-methionine from S-methyl-5-thio-alpha-D-ribose 1-phosphate: step 5/6. Its function is as follows. Catalyzes 2 different reactions between oxygen and the acireductone 1,2-dihydroxy-3-keto-5-methylthiopentene (DHK-MTPene) depending upon the metal bound in the active site. Fe-containing acireductone dioxygenase (Fe-ARD) produces formate and 2-keto-4-methylthiobutyrate (KMTB), the alpha-ketoacid precursor of methionine in the methionine recycle pathway. Ni-containing acireductone dioxygenase (Ni-ARD) produces methylthiopropionate, carbon monoxide and formate, and does not lie on the methionine recycle pathway. The chain is Acireductone dioxygenase from Sulfurihydrogenibium sp. (strain YO3AOP1).